The primary structure comprises 61 residues: Large ribosomal subunit protein uL30 (61 aa).

It belongs to the universal ribosomal protein uL30 family. Part of the 50S ribosomal subunit.

The sequence is that of Large ribosomal subunit protein uL30 from Bordetella avium (strain 197N).